The sequence spans 270 residues: Monocyte to macrophage differentiation factor 2 (270 aa).

At 1–38 (MFAPRLLDFQKTKYARFMNHRVPAHKRYQPTEYEHAAN) the chain is on the cytoplasmic side. The helical transmembrane segment at 39–59 (CATHAFWIIPSILGSSNLYFL) threads the bilayer. At 60-65 (SDDDWE) the chain is on the lumenal side. Residues 66 to 86 (TISAWIYGLGLCGLFVVSTVF) traverse the membrane as a helical segment. Over 87-102 (HTISWKKSHLRMVEHC) the chain is Cytoplasmic. The chain crosses the membrane as a helical span at residues 103-123 (LHMFDRMVIYFFIAASYAPWL). Residues 124-132 (NLRELGPWA) are Lumenal-facing. A helical transmembrane segment spans residues 133–153 (SHMRWLVWIMASVGTIYVFFF). Residues 154–182 (HERTGSCVQFLRGEACPKAGTACLPARYK) are Cytoplasmic-facing. A helical membrane pass occupies residues 183–203 (LVELLCYVVMGFFPALVILSM). Residues 204–205 (PN) lie on the Lumenal side of the membrane. A helical membrane pass occupies residues 206–226 (TEGIWELVTGGVFYCLGMVFF). At 227-233 (KSDGRIP) the chain is on the cytoplasmic side. Residues 234 to 254 (FAHAIWHLFVAFGAGTHYYAI) traverse the membrane as a helical segment. The Lumenal portion of the chain corresponds to 255-270 (WRYLYLPSTLQTKVSK).

The protein belongs to the ADIPOR family. As to expression, shows restricted expression with highest levels in brain and testis.

It localises to the golgi apparatus membrane. This Homo sapiens (Human) protein is Monocyte to macrophage differentiation factor 2.